A 206-amino-acid polypeptide reads, in one-letter code: Guanylate kinase (206 aa).

One can recognise a Guanylate kinase-like domain in the interval 6–184 (GTLYIISAPS…ALDDLKAIFR (179 aa)). Residue 13-20 (APSGAGKS) coordinates ATP.

The protein belongs to the guanylate kinase family.

It is found in the cytoplasm. It catalyses the reaction GMP + ATP = GDP + ADP. Functionally, essential for recycling GMP and indirectly, cGMP. This Pseudomonas fluorescens (strain Pf0-1) protein is Guanylate kinase.